The sequence spans 81 residues: Photosystem I iron-sulfur center (81 aa).

4Fe-4S ferredoxin-type domains follow at residues 2–31 and 39–68; these read SHSV…MVPW and IASA…VRVY. [4Fe-4S] cluster is bound by residues Cys11, Cys14, Cys17, Cys21, Cys48, Cys51, Cys54, and Cys58.

In terms of assembly, the eukaryotic PSI reaction center is composed of at least 11 subunits. The cofactor is [4Fe-4S] cluster.

It is found in the plastid. Its subcellular location is the chloroplast thylakoid membrane. The catalysed reaction is reduced [plastocyanin] + hnu + oxidized [2Fe-2S]-[ferredoxin] = oxidized [plastocyanin] + reduced [2Fe-2S]-[ferredoxin]. Functionally, apoprotein for the two 4Fe-4S centers FA and FB of photosystem I (PSI); essential for photochemical activity. FB is the terminal electron acceptor of PSI, donating electrons to ferredoxin. The C-terminus interacts with PsaA/B/D and helps assemble the protein into the PSI complex. Required for binding of PsaD and PsaE to PSI. PSI is a plastocyanin/cytochrome c6-ferredoxin oxidoreductase, converting photonic excitation into a charge separation, which transfers an electron from the donor P700 chlorophyll pair to the spectroscopically characterized acceptors A0, A1, FX, FA and FB in turn. This is Photosystem I iron-sulfur center from Pleurastrum terricola (Filamentous green alga).